Here is an 836-residue protein sequence, read N- to C-terminus: Protein PDC2 (836 aa).

Positions 64-139 constitute an HTH CENPB-type domain; sequence ELIRRRKRAN…VKKLNINITG (76 aa). Residues 626–640 are compositionally biased toward low complexity; that stretch reads TTSTSVVSDSPSGTT. The tract at residues 626 to 732 is disordered; sequence TTSTSVVSDS…NVQFGNGAGS (107 aa). Residues 641–651 show a composition bias toward polar residues; it reads QKYNNISTYPN. Residues 677–698 are compositionally biased toward low complexity; sequence GQELQNPQGQQQQEQQQQQQHQ. Positions 699 to 711 are enriched in polar residues; that stretch reads MSGYNFSPISNIE.

Essential for the synthesis of pyruvate decarboxylase. In Candida albicans (Yeast), this protein is Protein PDC2 (PDC2).